The sequence spans 297 residues: MTNVVIDTKPVWGNMLPQLKWKDGTVVISEDDKHNEPYGIGKFFNFKEDFTRLYFKAIVNNPRERKTIEALISLPRSVADVCNPGGVYLGGRTLVDNVAKKFATIKASVDANGKVGYDTSDLERLGVRCRYYVDDLVKDDALMRRILLENKWKSKYPALVKPYEEYQRSKPKTIVLPTNRNNPVRSNVDIKPVNPPSSKVVKTVETDERLKDPPHTGALKTLIPLQKPIAPVQISEKPVVVKPEIKSPSKVIQTPDPQTVVAGKIIPNNESADSRSLFGSPVLLICVASLLLLIIIL.

The disordered stretch occupies residues 175-199; the sequence is VLPTNRNNPVRSNVDIKPVNPPSSK. A compositionally biased stretch (polar residues) spans 176-185; that stretch reads LPTNRNNPVR. Asparagine 269 carries N-linked (GlcNAc...) asparagine; by host glycosylation. The chain crosses the membrane as a helical span at residues 277–297; that stretch reads LFGSPVLLICVASLLLLIIIL.

The protein belongs to the ascovirus HvAV ORF18 family.

The protein resides in the membrane. This is an uncharacterized protein from Noctuidae (owlet moths).